Reading from the N-terminus, the 101-residue chain is Large ribosomal subunit protein uL24c (101 aa).

Belongs to the universal ribosomal protein uL24 family. Part of the 50S ribosomal subunit.

Its subcellular location is the plastid. The protein localises to the chloroplast. Functionally, one of two assembly initiator proteins, it binds directly to the 5'-end of the 23S rRNA, where it nucleates assembly of the 50S subunit. The sequence is that of Large ribosomal subunit protein uL24c (rpl24) from Guillardia theta (Cryptophyte).